The chain runs to 60 residues: Rubredoxin 4 (60 aa).

The Rubredoxin-like domain occupies 4–55 (YKLYQCAQCGFEYDEAVGWPEDGIEPGTRWDDIPEDWSCPDCGAAKSDFFMV). Fe cation contacts are provided by C9, C12, C42, and C45.

Belongs to the rubredoxin family. It depends on Fe(3+) as a cofactor.

In terms of biological role, involved in the hydrocarbon hydroxylating system, which transfers electrons from NADH to rubredoxin reductase and then through rubredoxin to alkane 1 monooxygenase. This is Rubredoxin 4 (rubA4) from Rhodococcus sp. (strain Q15).